The following is a 45-amino-acid chain: Photosystem II reaction center protein K (45 aa).

A propeptide spanning residues 1–8 is cleaved from the precursor; the sequence is MNSALFLA. Residues 23-43 form a helical membrane-spanning segment; sequence ILPVIPVFFLLLAFVWQAAIG.

This sequence belongs to the PsbK family. PSII is composed of 1 copy each of membrane proteins PsbA, PsbB, PsbC, PsbD, PsbE, PsbF, PsbH, PsbI, PsbJ, PsbK, PsbL, PsbM, PsbT, PsbX, PsbY, PsbZ, Psb30/Ycf12, at least 3 peripheral proteins of the oxygen-evolving complex and a large number of cofactors. It forms dimeric complexes.

The protein resides in the plastid. Its subcellular location is the chloroplast thylakoid membrane. Functionally, one of the components of the core complex of photosystem II (PSII). PSII is a light-driven water:plastoquinone oxidoreductase that uses light energy to abstract electrons from H(2)O, generating O(2) and a proton gradient subsequently used for ATP formation. It consists of a core antenna complex that captures photons, and an electron transfer chain that converts photonic excitation into a charge separation. The sequence is that of Photosystem II reaction center protein K from Porphyra purpurea (Red seaweed).